The chain runs to 56 residues: Large ribosomal subunit protein bL33 (56 aa).

Belongs to the bacterial ribosomal protein bL33 family.

This is Large ribosomal subunit protein bL33 from Delftia acidovorans (strain DSM 14801 / SPH-1).